The primary structure comprises 261 residues: MSRKPLIAGNWKMNLNHYEAIALVQKIAFSLPDKYYDRVDVAVIPPFTDLRSVQTLVDGDKLRLTYGAQDLSPHDSGAYTGDVSGAFLAKLGCSYVVVGHSERRTYHNEDDALVAAKAATALKHGLTPIVCIGEHLDVREAGNHVAHNIEQLRGSLAGLLAEQIGSVVIAYEPVWAIGTGRVASAADAQEVCAAIRKELASLASPRIADTVRVLYGGSVNAKNVGDIVAQDDVDGGLVGGASLDGEHFATLAAIAAGGPLP.

Residue 10-12 (NWK) participates in substrate binding. His-100 serves as the catalytic Electrophile. Glu-172 (proton acceptor) is an active-site residue. Residues Gly-178, Ser-218, and 239-240 (GG) each bind substrate.

It belongs to the triosephosphate isomerase family. Homodimer.

It is found in the cytoplasm. The enzyme catalyses D-glyceraldehyde 3-phosphate = dihydroxyacetone phosphate. It functions in the pathway carbohydrate biosynthesis; gluconeogenesis. It participates in carbohydrate degradation; glycolysis; D-glyceraldehyde 3-phosphate from glycerone phosphate: step 1/1. Involved in the gluconeogenesis. Catalyzes stereospecifically the conversion of dihydroxyacetone phosphate (DHAP) to D-glyceraldehyde-3-phosphate (G3P). This is Triosephosphate isomerase from Mycobacterium tuberculosis (strain CDC 1551 / Oshkosh).